The following is a 167-amino-acid chain: Crossover junction endodeoxyribonuclease RuvC (167 aa).

Catalysis depends on residues aspartate 8, glutamate 67, and aspartate 139. Mg(2+)-binding residues include aspartate 8, glutamate 67, and aspartate 139.

It belongs to the RuvC family. Homodimer which binds Holliday junction (HJ) DNA. The HJ becomes 2-fold symmetrical on binding to RuvC with unstacked arms; it has a different conformation from HJ DNA in complex with RuvA. In the full resolvosome a probable DNA-RuvA(4)-RuvB(12)-RuvC(2) complex forms which resolves the HJ. Mg(2+) is required as a cofactor.

It localises to the cytoplasm. The enzyme catalyses Endonucleolytic cleavage at a junction such as a reciprocal single-stranded crossover between two homologous DNA duplexes (Holliday junction).. Its function is as follows. The RuvA-RuvB-RuvC complex processes Holliday junction (HJ) DNA during genetic recombination and DNA repair. Endonuclease that resolves HJ intermediates. Cleaves cruciform DNA by making single-stranded nicks across the HJ at symmetrical positions within the homologous arms, yielding a 5'-phosphate and a 3'-hydroxyl group; requires a central core of homology in the junction. The consensus cleavage sequence is 5'-(A/T)TT(C/G)-3'. Cleavage occurs on the 3'-side of the TT dinucleotide at the point of strand exchange. HJ branch migration catalyzed by RuvA-RuvB allows RuvC to scan DNA until it finds its consensus sequence, where it cleaves and resolves the cruciform DNA. In Halorhodospira halophila (strain DSM 244 / SL1) (Ectothiorhodospira halophila (strain DSM 244 / SL1)), this protein is Crossover junction endodeoxyribonuclease RuvC.